The following is a 182-amino-acid chain: MPLGDCNISTPDNKQNRKNQEIRVPRVRVIGSDGEMVGVLSRDEALAKAEEEGLDLVEIQPQADPPVCKIMDFGKFKFEQQKKANEAKKKTKQVEIKELKFRPVTDEGDYQIKLRNMRRFLEEGDKVKVNIRFRGREMSHQELGREMAARIEADLGEDIVIESRPRLEGRQMVMMIAPKKKI.

The tract at residues 1–22 (MPLGDCNISTPDNKQNRKNQEI) is disordered.

This sequence belongs to the IF-3 family. In terms of assembly, monomer.

It is found in the cytoplasm. In terms of biological role, IF-3 binds to the 30S ribosomal subunit and shifts the equilibrium between 70S ribosomes and their 50S and 30S subunits in favor of the free subunits, thus enhancing the availability of 30S subunits on which protein synthesis initiation begins. In Xanthomonas campestris pv. campestris (strain ATCC 33913 / DSM 3586 / NCPPB 528 / LMG 568 / P 25), this protein is Translation initiation factor IF-3.